The sequence spans 417 residues: Glutamyl-tRNA reductase (417 aa).

Residues 49–52 (TCNR), Ser-107, 112–114 (EEQ), and Gln-118 contribute to the substrate site. Cys-50 functions as the Nucleophile in the catalytic mechanism. 187–192 (GTGEVS) serves as a coordination point for NADP(+).

This sequence belongs to the glutamyl-tRNA reductase family. As to quaternary structure, homodimer.

The enzyme catalyses (S)-4-amino-5-oxopentanoate + tRNA(Glu) + NADP(+) = L-glutamyl-tRNA(Glu) + NADPH + H(+). Its pathway is porphyrin-containing compound metabolism; protoporphyrin-IX biosynthesis; 5-aminolevulinate from L-glutamyl-tRNA(Glu): step 1/2. Catalyzes the NADPH-dependent reduction of glutamyl-tRNA(Glu) to glutamate 1-semialdehyde (GSA). The sequence is that of Glutamyl-tRNA reductase from Cenarchaeum symbiosum (strain A).